The primary structure comprises 514 residues: 2,3-bisphosphoglycerate-independent phosphoglycerate mutase (514 aa).

Asp-13 and Ser-63 together coordinate Mn(2+). Catalysis depends on Ser-63, which acts as the Phosphoserine intermediate. Substrate is bound by residues His-124, 154-155 (RD), Arg-186, Arg-192, 258-261 (RADR), and Lys-332. Positions 399, 403, 440, 441, and 459 each coordinate Mn(2+).

Belongs to the BPG-independent phosphoglycerate mutase family. As to quaternary structure, monomer. Requires Mn(2+) as cofactor.

It carries out the reaction (2R)-2-phosphoglycerate = (2R)-3-phosphoglycerate. Its pathway is carbohydrate degradation; glycolysis; pyruvate from D-glyceraldehyde 3-phosphate: step 3/5. Functionally, catalyzes the interconversion of 2-phosphoglycerate and 3-phosphoglycerate. This is 2,3-bisphosphoglycerate-independent phosphoglycerate mutase from Legionella pneumophila subsp. pneumophila (strain Philadelphia 1 / ATCC 33152 / DSM 7513).